The following is a 330-amino-acid chain: Aspartate--ammonia ligase (330 aa).

The protein belongs to the class-II aminoacyl-tRNA synthetase family. AsnA subfamily.

The protein localises to the cytoplasm. The enzyme catalyses L-aspartate + NH4(+) + ATP = L-asparagine + AMP + diphosphate + H(+). Its pathway is amino-acid biosynthesis; L-asparagine biosynthesis; L-asparagine from L-aspartate (ammonia route): step 1/1. This is Aspartate--ammonia ligase from Haemophilus influenzae (strain ATCC 51907 / DSM 11121 / KW20 / Rd).